The following is a 287-amino-acid chain: 33 kDa chaperonin (287 aa).

Intrachain disulfides connect Cys231/Cys233 and Cys264/Cys267.

It belongs to the HSP33 family. Under oxidizing conditions two disulfide bonds are formed involving the reactive cysteines. Under reducing conditions zinc is bound to the reactive cysteines and the protein is inactive.

It localises to the cytoplasm. In terms of biological role, redox regulated molecular chaperone. Protects both thermally unfolding and oxidatively damaged proteins from irreversible aggregation. Plays an important role in the bacterial defense system toward oxidative stress. This chain is 33 kDa chaperonin, found in Thermosipho melanesiensis (strain DSM 12029 / CIP 104789 / BI429).